The primary structure comprises 236 residues: Leucyl/phenylalanyl-tRNA--protein transferase (236 aa).

This sequence belongs to the L/F-transferase family.

The protein localises to the cytoplasm. The catalysed reaction is N-terminal L-lysyl-[protein] + L-leucyl-tRNA(Leu) = N-terminal L-leucyl-L-lysyl-[protein] + tRNA(Leu) + H(+). The enzyme catalyses N-terminal L-arginyl-[protein] + L-leucyl-tRNA(Leu) = N-terminal L-leucyl-L-arginyl-[protein] + tRNA(Leu) + H(+). It carries out the reaction L-phenylalanyl-tRNA(Phe) + an N-terminal L-alpha-aminoacyl-[protein] = an N-terminal L-phenylalanyl-L-alpha-aminoacyl-[protein] + tRNA(Phe). In terms of biological role, functions in the N-end rule pathway of protein degradation where it conjugates Leu, Phe and, less efficiently, Met from aminoacyl-tRNAs to the N-termini of proteins containing an N-terminal arginine or lysine. The sequence is that of Leucyl/phenylalanyl-tRNA--protein transferase from Idiomarina loihiensis (strain ATCC BAA-735 / DSM 15497 / L2-TR).